The primary structure comprises 238 residues: ATP-dependent dethiobiotin synthetase BioD (238 aa).

Position 13 to 18 (13 to 18 (EIGKTV)) interacts with ATP. Thr17 contributes to the Mg(2+) binding site. Residue Lys38 is part of the active site. Residue Thr42 coordinates substrate. Arg59 and Glu111 together coordinate Mg(2+). ATP contacts are provided by residues 111–114 (EGAG), 175–176 (NQ), and 204–206 (PLL).

It belongs to the dethiobiotin synthetase family. As to quaternary structure, homodimer. It depends on Mg(2+) as a cofactor.

The protein resides in the cytoplasm. The catalysed reaction is (7R,8S)-7,8-diammoniononanoate + CO2 + ATP = (4R,5S)-dethiobiotin + ADP + phosphate + 3 H(+). Its pathway is cofactor biosynthesis; biotin biosynthesis; biotin from 7,8-diaminononanoate: step 1/2. Functionally, catalyzes a mechanistically unusual reaction, the ATP-dependent insertion of CO2 between the N7 and N8 nitrogen atoms of 7,8-diaminopelargonic acid (DAPA, also called 7,8-diammoniononanoate) to form a ureido ring. The chain is ATP-dependent dethiobiotin synthetase BioD from Geobacillus kaustophilus (strain HTA426).